The sequence spans 205 residues: Holliday junction branch migration complex subunit RuvA (205 aa).

Residues 1-64 (MIGRLKGILI…ENLHQLFGFA (64 aa)) form a domain I region. The domain II stretch occupies residues 65-143 (EQRDRSLFRT…NWDLPQGDML (79 aa)). The interval 144-153 (AHGEIQAIAS) is flexible linker. The tract at residues 153-205 (SDNDIYAEAESALIALGYKPVDAAKMVASAAKQKPEARSEELIRIALRSLAGV) is domain III.

Belongs to the RuvA family. In terms of assembly, homotetramer. Forms an RuvA(8)-RuvB(12)-Holliday junction (HJ) complex. HJ DNA is sandwiched between 2 RuvA tetramers; dsDNA enters through RuvA and exits via RuvB. An RuvB hexamer assembles on each DNA strand where it exits the tetramer. Each RuvB hexamer is contacted by two RuvA subunits (via domain III) on 2 adjacent RuvB subunits; this complex drives branch migration. In the full resolvosome a probable DNA-RuvA(4)-RuvB(12)-RuvC(2) complex forms which resolves the HJ.

Its subcellular location is the cytoplasm. Functionally, the RuvA-RuvB-RuvC complex processes Holliday junction (HJ) DNA during genetic recombination and DNA repair, while the RuvA-RuvB complex plays an important role in the rescue of blocked DNA replication forks via replication fork reversal (RFR). RuvA specifically binds to HJ cruciform DNA, conferring on it an open structure. The RuvB hexamer acts as an ATP-dependent pump, pulling dsDNA into and through the RuvAB complex. HJ branch migration allows RuvC to scan DNA until it finds its consensus sequence, where it cleaves and resolves the cruciform DNA. This Cellvibrio japonicus (strain Ueda107) (Pseudomonas fluorescens subsp. cellulosa) protein is Holliday junction branch migration complex subunit RuvA.